The chain runs to 303 residues: UDP-3-O-acyl-N-acetylglucosamine deacetylase (303 aa).

His-78, His-237, and Asp-241 together coordinate Zn(2+). The active-site Proton donor is His-264.

It belongs to the LpxC family. It depends on Zn(2+) as a cofactor.

The catalysed reaction is a UDP-3-O-[(3R)-3-hydroxyacyl]-N-acetyl-alpha-D-glucosamine + H2O = a UDP-3-O-[(3R)-3-hydroxyacyl]-alpha-D-glucosamine + acetate. It functions in the pathway glycolipid biosynthesis; lipid IV(A) biosynthesis; lipid IV(A) from (3R)-3-hydroxytetradecanoyl-[acyl-carrier-protein] and UDP-N-acetyl-alpha-D-glucosamine: step 2/6. In terms of biological role, catalyzes the hydrolysis of UDP-3-O-myristoyl-N-acetylglucosamine to form UDP-3-O-myristoylglucosamine and acetate, the committed step in lipid A biosynthesis. This Xanthomonas euvesicatoria pv. vesicatoria (strain 85-10) (Xanthomonas campestris pv. vesicatoria) protein is UDP-3-O-acyl-N-acetylglucosamine deacetylase.